We begin with the raw amino-acid sequence, 460 residues long: Trigger factor (460 aa).

The PPIase FKBP-type domain maps to aspartate 166–proline 245. The segment at alanine 434–phenylalanine 460 is disordered. The segment covering valine 449 to phenylalanine 460 has biased composition (low complexity).

It belongs to the FKBP-type PPIase family. Tig subfamily.

It localises to the cytoplasm. It catalyses the reaction [protein]-peptidylproline (omega=180) = [protein]-peptidylproline (omega=0). In terms of biological role, involved in protein export. Acts as a chaperone by maintaining the newly synthesized protein in an open conformation. Functions as a peptidyl-prolyl cis-trans isomerase. In Paenarthrobacter aurescens (strain TC1), this protein is Trigger factor.